The sequence spans 221 residues: Sugar transporter SWEET1 (221 aa).

A run of 7 helical transmembrane segments spans residues 3 to 23 (AGGF…LGMF), 42 to 62 (VQFL…SYGA), 68 to 88 (ILIV…LAYL), 96 to 116 (VVLL…GYFW), 129 to 149 (LGLF…ADLA), 160 to 180 (LSYP…LYGF), and 186 to 206 (YIMV…WLFW). One can recognise a MtN3/slv 1 domain in the interval 10–94 (LIYGACVVFT…LAYLHYCPRK (85 aa)). Residues 127–212 (QQLGLFCSVF…WLFWKYPQEQ (86 aa)) form the MtN3/slv 2 domain. Positions 149–221 (AKVIQTKSTQ…QDRNYWLLQT (73 aa)) are mediates interaction with TRPV2.

It belongs to the SWEET sugar transporter family. As to quaternary structure, interacts with TRPV2; the interaction probably occurs intracellularly and depends on TRPV2 N-glycosylation. Ubiquitously expressed with highest expression in oviduct, epididymis and intestine.

It is found in the golgi apparatus membrane. It localises to the cell membrane. In terms of biological role, mediates sugar transport across membranes. May stimulate V(D)J recombination by the activation of RAG1. The chain is Sugar transporter SWEET1 (SLC50A1) from Homo sapiens (Human).